A 515-amino-acid polypeptide reads, in one-letter code: Cytochrome P450 monooxygenase paxP (515 aa).

A helical membrane pass occupies residues 20–36; that stretch reads SLLWKLGVFAVLVYFLL. Cys456 contributes to the heme binding site.

Belongs to the cytochrome P450 family. Requires heme as cofactor.

It is found in the membrane. Its pathway is secondary metabolite biosynthesis. In terms of biological role, cytochrome P450 monooxygenase; part of the ATM2 gene cluster that mediates the biosynthesis of paxilline, a mycotoxin that acts as an inhibitor of mammalian maxi-K channels. PaxG, the geranylgeranyl diphosphate (GGPP) synthase is proposed to catalyze the first step in paxilline biosynthesis. Condensation of indole-3-glycerol phosphate with GGPP by paxC then forms 3-geranylgeranylindole (3-GGI), followed by epoxidation and cyclization of this intermediate (by paxM and paxB) to form paspaline. Paspaline is subsequently converted to 13-desoxypaxilline by paxP, the latter being then converted to paxilline by paxQ. Finally paxilline can be mono- and di-prenylated by paxD. PaxP can also utilized beta-paxitriol and alpha-PC-M6 as substrates converting them to paxilline. This Penicillium paxilli protein is Cytochrome P450 monooxygenase paxP.